The sequence spans 572 residues: Proline dehydrogenase 1, mitochondrial (572 aa).

A compositionally biased stretch (low complexity) spans asparagine 105–asparagine 124. The interval asparagine 105 to asparagine 140 is disordered.

This sequence belongs to the proline oxidase family. FAD is required as a cofactor.

The protein resides in the mitochondrion matrix. The catalysed reaction is L-proline + a quinone = (S)-1-pyrroline-5-carboxylate + a quinol + H(+). It participates in amino-acid degradation; L-proline degradation into L-glutamate; L-glutamate from L-proline: step 1/2. Converts proline to delta-1-pyrroline-5-carboxylate. The polypeptide is Proline dehydrogenase 1, mitochondrial (prodh) (Dictyostelium discoideum (Social amoeba)).